We begin with the raw amino-acid sequence, 369 residues long: Naringenin,2-oxoglutarate 3-dioxygenase (369 aa).

One can recognise a Fe2OG dioxygenase domain in the interval 193 to 297 (CVDMDQKVVV…RLSIATFQNP (105 aa)). Residues His220, Asp222, and His278 each contribute to the Fe cation site. Arg288 provides a ligand contact to 2-oxoglutarate.

It belongs to the iron/ascorbate-dependent oxidoreductase family. It depends on Fe(2+) as a cofactor. L-ascorbate is required as a cofactor.

It catalyses the reaction a (2S)-flavan-4-one + 2-oxoglutarate + O2 = a (2R,3R)-dihydroflavonol + succinate + CO2. Its pathway is secondary metabolite biosynthesis; flavonoid biosynthesis. Catalyzes the 3-beta-hydroxylation of 2S-flavanones to 2R,3R-dihydroflavonols which are intermediates in the biosynthesis of flavonols, anthocyanidins, catechins and proanthocyanidins in plants. The sequence is that of Naringenin,2-oxoglutarate 3-dioxygenase (AN3) from Petunia hybrida (Petunia).